A 525-amino-acid chain; its full sequence is ATP synthase subunit alpha (525 aa).

171-178 lines the ATP pocket; that stretch reads GDRQTGKS.

The protein belongs to the ATPase alpha/beta chains family. F-type ATPases have 2 components, CF(1) - the catalytic core - and CF(0) - the membrane proton channel. CF(1) has five subunits: alpha(3), beta(3), gamma(1), delta(1), epsilon(1). CF(0) has three main subunits: a(1), b(2) and c(9-12). The alpha and beta chains form an alternating ring which encloses part of the gamma chain. CF(1) is attached to CF(0) by a central stalk formed by the gamma and epsilon chains, while a peripheral stalk is formed by the delta and b chains.

It is found in the cell inner membrane. It carries out the reaction ATP + H2O + 4 H(+)(in) = ADP + phosphate + 5 H(+)(out). Produces ATP from ADP in the presence of a proton gradient across the membrane. The alpha chain is a regulatory subunit. The chain is ATP synthase subunit alpha from Flavobacterium psychrophilum (strain ATCC 49511 / DSM 21280 / CIP 103535 / JIP02/86).